The chain runs to 760 residues: Semaphorin-4A (760 aa).

A signal peptide spans 1–32; the sequence is MALPSLGQDSWSLLRVFFFQLFLLPSLPPASG. The Extracellular segment spans residues 33–682; that stretch reads TGGQGPMPRV…MAAQRSYWPH (650 aa). The Sema domain occupies 36 to 494; sequence QGPMPRVKYH…FSGGIWRVPR (459 aa). Cysteines 113 and 124 form a disulfide. N-linked (GlcNAc...) asparagine glycans are attached at residues Asn-120 and Asn-135. 3 cysteine pairs are disulfide-bonded: Cys-142–Cys-151, Cys-269–Cys-379, and Cys-293–Cys-339. A glycan (N-linked (GlcNAc...) asparagine) is linked at Asn-496. The 52-residue stretch at 496–547 folds into the PSI domain; it reads NCSVYESCVDCVLARDPHCAWDPESRLCSLLSGSTKPWKQDMERGNPEWVCT. Disulfide bonds link Cys-497/Cys-514, Cys-506/Cys-523, and Cys-579/Cys-623. Positions 572 to 630 constitute an Ig-like C2-type domain; it reads NSILELPCPHLSALASYHWSHGRAKISEASATVYNGSLLLLPQDGVGGLYQCVATENGY. Asn-606 is a glycosylation site (N-linked (GlcNAc...) asparagine). A helical membrane pass occupies residues 683-703; it reads FLIVTVLLAIVLLGVLTLLLA. The Cytoplasmic segment spans residues 704–760; the sequence is SPLGALRARGKVQGCGMLPPREKAPLSRDQHLQPSKDHRTSASDVDADNNHLGAEVA. The segment at 720–760 is disordered; sequence MLPPREKAPLSRDQHLQPSKDHRTSASDVDADNNHLGAEVA. Over residues 723-744 the composition is skewed to basic and acidic residues; it reads PREKAPLSRDQHLQPSKDHRTS.

This sequence belongs to the semaphorin family. In terms of assembly, interacts with PLXNB1, PLXNB2 and PLXNB3. Interacts with PLXND1. Interacts with TIMD2. In terms of tissue distribution, expressed in neurons and glia in the developing hippocampus.

Its subcellular location is the cell membrane. Its function is as follows. Cell surface receptor for PLXNB1, PLXNB2, PLXNB3 and PLXND1 that plays an important role in cell-cell signaling. Regulates glutamatergic and GABAergic synapse development. Promotes the development of inhibitory synapses in a PLXNB1-dependent manner and promotes the development of excitatory synapses in a PLXNB2-dependent manner. Plays a role in priming antigen-specific T-cells, promotes differentiation of Th1 T-helper cells, and thereby contributes to adaptive immunity. Promotes phosphorylation of TIMD2. Inhibits angiogenesis. Promotes axon growth cone collapse. Inhibits axonal extension by providing local signals to specify territories inaccessible for growing axons. The sequence is that of Semaphorin-4A (Sema4a) from Mus musculus (Mouse).